A 278-amino-acid polypeptide reads, in one-letter code: Shikimate dehydrogenase (NADP(+)) (278 aa).

Shikimate contacts are provided by residues serine 19 to serine 21 and threonine 66. The Proton acceptor role is filled by lysine 70. Aspartate 82 serves as a coordination point for NADP(+). The shikimate site is built by asparagine 91 and aspartate 107. Residues glycine 133 to alanine 137, asparagine 157 to lysine 162, and isoleucine 222 contribute to the NADP(+) site. Tyrosine 224 provides a ligand contact to shikimate. Residue glycine 245 coordinates NADP(+).

The protein belongs to the shikimate dehydrogenase family. Homodimer.

It carries out the reaction shikimate + NADP(+) = 3-dehydroshikimate + NADPH + H(+). It functions in the pathway metabolic intermediate biosynthesis; chorismate biosynthesis; chorismate from D-erythrose 4-phosphate and phosphoenolpyruvate: step 4/7. Involved in the biosynthesis of the chorismate, which leads to the biosynthesis of aromatic amino acids. Catalyzes the reversible NADPH linked reduction of 3-dehydroshikimate (DHSA) to yield shikimate (SA). The polypeptide is Shikimate dehydrogenase (NADP(+)) (Dinoroseobacter shibae (strain DSM 16493 / NCIMB 14021 / DFL 12)).